Here is a 118-residue protein sequence, read N- to C-terminus: Small ribosomal subunit protein uS13 (118 aa).

The disordered stretch occupies residues 94–118; sequence SLPLRGQRTKTNARTRKGPRKPIKR.

Belongs to the universal ribosomal protein uS13 family. In terms of assembly, part of the 30S ribosomal subunit. Forms a loose heterodimer with protein S19. Forms two bridges to the 50S subunit in the 70S ribosome.

In terms of biological role, located at the top of the head of the 30S subunit, it contacts several helices of the 16S rRNA. In the 70S ribosome it contacts the 23S rRNA (bridge B1a) and protein L5 of the 50S subunit (bridge B1b), connecting the 2 subunits; these bridges are implicated in subunit movement. Contacts the tRNAs in the A and P-sites. The sequence is that of Small ribosomal subunit protein uS13 from Photobacterium profundum (strain SS9).